The primary structure comprises 216 residues: MSELKIKAAKAAIAYIEDDMVIGVGTGSTVNFFIKELAAIKHKIEACVASSKATEALLRAEGIPVIDLNSVQDLPIYVDGADEVNERGEMIKGGGGALTREKIVANVATQFICIVDESKVVKRLGEFPVAVEVVPMARSFVARQIVKLGGDPEYREGFVTDNGNIILDVFNLNFSTPMALEDSLNVIPGVVENGVFAKRLADKVLVASASGVNNLK.

Substrate is bound by residues 26-29, 79-82, and 92-95; these read TGST, DGAD, and KGGG. The Proton acceptor role is filled by E101. K119 contributes to the substrate binding site.

Belongs to the ribose 5-phosphate isomerase family. As to quaternary structure, homodimer.

The enzyme catalyses aldehydo-D-ribose 5-phosphate = D-ribulose 5-phosphate. It functions in the pathway carbohydrate degradation; pentose phosphate pathway; D-ribose 5-phosphate from D-ribulose 5-phosphate (non-oxidative stage): step 1/1. In terms of biological role, catalyzes the reversible conversion of ribose-5-phosphate to ribulose 5-phosphate. The protein is Ribose-5-phosphate isomerase A of Legionella pneumophila (strain Paris).